Reading from the N-terminus, the 317-residue chain is Ribosomal protein L11 methyltransferase (317 aa).

4 residues coordinate S-adenosyl-L-methionine: Thr-158, Gly-179, Asp-201, and Asn-244.

It belongs to the methyltransferase superfamily. PrmA family.

Its subcellular location is the cytoplasm. It catalyses the reaction L-lysyl-[protein] + 3 S-adenosyl-L-methionine = N(6),N(6),N(6)-trimethyl-L-lysyl-[protein] + 3 S-adenosyl-L-homocysteine + 3 H(+). Its function is as follows. Methylates ribosomal protein L11. This chain is Ribosomal protein L11 methyltransferase, found in Streptococcus equi subsp. equi (strain 4047).